The following is a 193-amino-acid chain: 7-methyl-GTP pyrophosphatase (193 aa).

Aspartate 68 (proton acceptor) is an active-site residue.

The protein belongs to the Maf family. YceF subfamily. A divalent metal cation is required as a cofactor.

The protein localises to the cytoplasm. It carries out the reaction N(7)-methyl-GTP + H2O = N(7)-methyl-GMP + diphosphate + H(+). Nucleoside triphosphate pyrophosphatase that hydrolyzes 7-methyl-GTP (m(7)GTP). May have a dual role in cell division arrest and in preventing the incorporation of modified nucleotides into cellular nucleic acids. The chain is 7-methyl-GTP pyrophosphatase from Chromobacterium violaceum (strain ATCC 12472 / DSM 30191 / JCM 1249 / CCUG 213 / NBRC 12614 / NCIMB 9131 / NCTC 9757 / MK).